The following is a 323-amino-acid chain: Aldo-keto reductase family 1 member C3 (323 aa).

Residues 20–24 (GFGTY) and aspartate 50 contribute to the NADP(+) site. Tyrosine 55 (proton donor) is an active-site residue. Histidine 117 provides a ligand contact to substrate. NADP(+) contacts are provided by residues 166–167 (SN), glutamine 190, 216–221 (YSALGS), and 270–280 (KSYNEQRIREN).

This sequence belongs to the aldo/keto reductase family.

Its subcellular location is the cytoplasm. It catalyses the reaction a 3alpha-hydroxysteroid + NADP(+) = a 3-oxosteroid + NADPH + H(+). It carries out the reaction a 3alpha-hydroxysteroid + NAD(+) = a 3-oxosteroid + NADH + H(+). The enzyme catalyses prostaglandin F2alpha + NADP(+) = prostaglandin D2 + NADPH + H(+). The catalysed reaction is testosterone + NAD(+) = androst-4-ene-3,17-dione + NADH + H(+). It catalyses the reaction testosterone + NADP(+) = androst-4-ene-3,17-dione + NADPH + H(+). It carries out the reaction prostaglandin F2alpha + NADP(+) = prostaglandin H2 + NADPH + H(+). The enzyme catalyses prostaglandin D2 + NADPH + H(+) = 11beta-prostaglandin F2 + NADP(+). The catalysed reaction is prostaglandin D2-ethanolamide + NADPH + H(+) = 11beta-prostaglandin F2-ethanolamide + NADP(+). It catalyses the reaction 17beta-estradiol + NADP(+) = estrone + NADPH + H(+). It carries out the reaction 17beta-estradiol + NAD(+) = estrone + NADH + H(+). The enzyme catalyses (20S)-hydroxypregn-4-en-3-one + NADP(+) = progesterone + NADPH + H(+). The catalysed reaction is (20S)-hydroxypregn-4-en-3-one + NAD(+) = progesterone + NADH + H(+). It catalyses the reaction 5alpha-androstane-3alpha,17beta-diol + NADP(+) = 17beta-hydroxy-5alpha-androstan-3-one + NADPH + H(+). It carries out the reaction 5alpha-androstane-3alpha,17beta-diol + NAD(+) = 17beta-hydroxy-5alpha-androstan-3-one + NADH + H(+). The enzyme catalyses androsterone + NADPH + H(+) = 5alpha-androstane-3alpha,17beta-diol + NADP(+). The catalysed reaction is 5alpha-androstane-3alpha,17beta-diol + NAD(+) = androsterone + NADH + H(+). It catalyses the reaction 5alpha-androstane-3beta,17beta-diol + NADP(+) = 17beta-hydroxy-5alpha-androstan-3-one + NADPH + H(+). It carries out the reaction 9-cis-retinol + NADP(+) = 9-cis-retinal + NADPH + H(+). Its pathway is steroid metabolism. Its function is as follows. Cytosolic aldo-keto reductase that catalyzes the NADH and NADPH-dependent reduction of ketosteroids to hydroxysteroids. Acts as a NAD(P)(H)-dependent 3-, 17- and 20-ketosteroid reductase on the steroid nucleus and side chain and regulates the metabolism of androgens, estrogens and progesterone. Displays the ability to catalyze both oxidation and reduction in vitro, but most probably acts as a reductase in vivo since the oxidase activity measured in vitro is inhibited by physiological concentration of NADPH. Acts preferentially as a 17-ketosteroid reductase and has the highest catalytic efficiency of the AKR1C enzyme for the reduction of delta4-androstenedione to form testosterone. Reduces prostaglandin (PG) D2 to 11beta-prostaglandin F2, progesterone to 20alpha-hydroxyprogesterone and estrone to 17beta-estradiol. Catalyzes the transformation of the potent androgen dihydrotestosterone (DHT) into the less active form, 5-alpha-androstan-3-alpha,17-beta-diol (3-alpha-diol). Also displays retinaldehyde reductase activity toward 9-cis-retinal. The polypeptide is Aldo-keto reductase family 1 member C3 (AKR1C3) (Pongo abelii (Sumatran orangutan)).